A 346-amino-acid polypeptide reads, in one-letter code: 2-oxoglutarate synthase subunit KorA (346 aa).

As to quaternary structure, heterotetramer of the KorA, KorB, KorC and KorD subunits.

The catalysed reaction is 2 oxidized [2Fe-2S]-[ferredoxin] + 2-oxoglutarate + CoA = succinyl-CoA + 2 reduced [2Fe-2S]-[ferredoxin] + CO2 + H(+). The sequence is that of 2-oxoglutarate synthase subunit KorA (korA) from Archaeoglobus fulgidus (strain ATCC 49558 / DSM 4304 / JCM 9628 / NBRC 100126 / VC-16).